The primary structure comprises 670 residues: Acetyl-coenzyme A synthetase (670 aa).

Residues 211-214 (RGGK) and Thr-329 contribute to the CoA site. ATP contacts are provided by residues 404 to 406 (GEP), 428 to 433 (DTYWQT), Asp-519, and Arg-534. Ser-542 contacts CoA. Arg-545 serves as a coordination point for ATP. CoA is bound at residue Arg-603.

It belongs to the ATP-dependent AMP-binding enzyme family.

It catalyses the reaction acetate + ATP + CoA = acetyl-CoA + AMP + diphosphate. The polypeptide is Acetyl-coenzyme A synthetase (facA) (Emericella nidulans (strain FGSC A4 / ATCC 38163 / CBS 112.46 / NRRL 194 / M139) (Aspergillus nidulans)).